Consider the following 507-residue polypeptide: ATP synthase subunit alpha, chloroplastic (507 aa).

170–177 (GDRQTGKT) serves as a coordination point for ATP.

This sequence belongs to the ATPase alpha/beta chains family. F-type ATPases have 2 components, CF(1) - the catalytic core - and CF(0) - the membrane proton channel. CF(1) has five subunits: alpha(3), beta(3), gamma(1), delta(1), epsilon(1). CF(0) has four main subunits: a, b, b' and c.

The protein localises to the plastid. Its subcellular location is the chloroplast thylakoid membrane. It carries out the reaction ATP + H2O + 4 H(+)(in) = ADP + phosphate + 5 H(+)(out). Produces ATP from ADP in the presence of a proton gradient across the membrane. The alpha chain is a regulatory subunit. In Nicotiana sylvestris (Wood tobacco), this protein is ATP synthase subunit alpha, chloroplastic.